The sequence spans 203 residues: Inositol diphosphatase DSP3 (203 aa).

The Tyrosine-protein phosphatase domain maps to 20 to 169 (NFSMVEDGIY…FDIVSLRQCL (150 aa)). Residues 76-88 (FGIEGKTDPPTPM) are WPD loop important for active site topology. The active-site Phosphocysteine intermediate is the C112.

It belongs to the protein-tyrosine phosphatase family. Atypical dual-specificity phosphatase Siw14-like subfamily. In terms of assembly, interacts with FLZ1. Highly expressed in roots, stems and flowers. Expressed at low levels in leaves and siliques.

The protein resides in the nucleus. It catalyses the reaction 5-diphospho-1D-myo-inositol 1,2,3,4,6-pentakisphosphate + H2O = 1D-myo-inositol hexakisphosphate + phosphate + H(+). It carries out the reaction 1,5-bis(diphospho)-1D-myo-inositol 2,3,4,6-tetrakisphosphate + H2O = 1-diphospho-1D-myo-inositol 2,3,4,5,6-pentakisphosphate + phosphate + 2 H(+). The catalysed reaction is 3,5-bis(diphospho)-1D-myo-inositol 1,2,4,6-tetrakisphosphate + H2O = 3-diphospho-1D-myo-inositol 1,2,4,5,6-pentakisphosphate + phosphate + 2 H(+). The enzyme catalyses 6-diphospho-1D-myo-inositol pentakisphosphate + H2O = 1D-myo-inositol hexakisphosphate + phosphate + H(+). Cleaves the beta-phosphate at the 5-position of soluble inositol pyrophosphates. Has highest activity on 5-diphosphoinositol 1,2,3,4,6-pentakisphosphate (5-InsP(7)), 1,5-bis-diphosphoinositol 2,3,4,6-tetrakisphosphate (1,5-InsP(8)) and 3,5-InsP(8). Possesses phosphotyrosine phosphatase activity in vitro. Dephosphorylates the phosphoinositides PI(3,5)P2. Hydrolyzes para-nitrophenyl phosphate and O-methylfluorescein phosphate in vitro. The chain is Inositol diphosphatase DSP3 from Arabidopsis thaliana (Mouse-ear cress).